We begin with the raw amino-acid sequence, 279 residues long: uncharacterized protein (279 aa).

One can recognise a GIY-YIG domain in the interval 2-90 (KIGYIYAIEN…IRDYGSLNTI (89 aa)).

This sequence belongs to the IIV-6 019R family.

This is an uncharacterized protein from Acheta domesticus (House cricket).